A 615-amino-acid polypeptide reads, in one-letter code: Protein ENHANCED DISEASE RESISTANCE 4 (615 aa).

Disordered stretches follow at residues 46 to 271 (IAPS…DDDE), 292 to 336 (YKEQ…GRQG), and 549 to 592 (THDI…RGSP). Polar residues-rich tracts occupy residues 63–89 (NEPQSVPETNNVSSSSGQDTVLPSSPG) and 119–129 (GDGTNEIQEQE). Residues 104–129 (MESTEKELDDLELSNGDGTNEIQEQE) adopt a coiled-coil conformation. Basic and acidic residues predominate over residues 134–148 (DSEKNEREDNSRLES). Positions 159-168 (GSGSSSGSLS) are enriched in low complexity. 2 stretches are compositionally biased toward polar residues: residues 296–314 (GASSSSPFSENRRNGITTY) and 552–564 (INANRNSNSTSES). Residues 565 to 577 (PIDKAPSKPEKLR) show a composition bias toward basic and acidic residues.

As to quaternary structure, interacts with RLK902. Binds and recruits EDR1 at the powdery mildew (e.g. G.cichoracearum) penetration site on the plasma membrane. Interacts with CHC2. Expressed in stems and rosette leaves, and weakly in inflorescences. Not detected in roots.

The protein resides in the cell membrane. It is found in the endosome. In terms of biological role, plays a negative role in salicylic acid (SA)-mediated resistance to powdery mildew (e.g. Golovinomyces cichoracearum). May modulate plant immunity by regulating the relocation of EDR1 by interacting with CHC2 and modulating endocytosis. The chain is Protein ENHANCED DISEASE RESISTANCE 4 from Arabidopsis thaliana (Mouse-ear cress).